Reading from the N-terminus, the 338-residue chain is MNLQRFPRYPLTFGPTPIQPLKRLSDHLGGKVHLYAKREDCNSGFAFGGNKTRKLEYLIPEALAQGCDTLVSIGGIQSNQTRQVAAVAAHLGMKCVLVQENWVNYSDAVYDRVGNIQMSRILGADVRLVADGFDIGFRKSWEDALESVRAAGGKPYAIPAGCSDHPLGGLGFVGFAEEVRQQEAELGFKFDYIVVCSVTGSTQAGMVVGFADDGRAERVIGIDASAKPAQTREQITRIAKQTAEQVGLGRDITSKDVVLDERFGGPEYGLPNDGTLEAIRLCARLEGVLTDPVYEGKSMHGMIEMVRNGEFPEGSRVLYAHLGGVPALNGYSFIFRNG.

At K51 the chain carries N6-(pyridoxal phosphate)lysine. S78 (nucleophile) is an active-site residue.

It belongs to the ACC deaminase/D-cysteine desulfhydrase family. As to quaternary structure, homotrimer. It depends on pyridoxal 5'-phosphate as a cofactor.

It carries out the reaction 1-aminocyclopropane-1-carboxylate + H2O = 2-oxobutanoate + NH4(+). In terms of biological role, catalyzes a cyclopropane ring-opening reaction, the irreversible conversion of 1-aminocyclopropane-1-carboxylate (ACC) to ammonia and alpha-ketobutyrate. Allows growth on ACC as a nitrogen source. This is 1-aminocyclopropane-1-carboxylate deaminase from Paraburkholderia phytofirmans (strain DSM 17436 / LMG 22146 / PsJN) (Burkholderia phytofirmans).